A 340-amino-acid polypeptide reads, in one-letter code: NADH-quinone oxidoreductase subunit H (340 aa).

A run of 9 helical transmembrane segments spans residues 9–29, 81–101, 113–133, 158–178, 184–204, 221–240, 245–264, 273–293, and 316–336; these read IWII…VAFI, LIAP…IPFA, LLFL…AGWA, GFAL…GIVL, LWHW…ITAV, IVAG…FFLA, MVLV…LSPF, LFAW…FIFT, and VLIP…EFHW.

The protein belongs to the complex I subunit 1 family. As to quaternary structure, NDH-1 is composed of 14 different subunits. Subunits NuoA, H, J, K, L, M, N constitute the membrane sector of the complex.

Its subcellular location is the cell inner membrane. The catalysed reaction is a quinone + NADH + 5 H(+)(in) = a quinol + NAD(+) + 4 H(+)(out). Its function is as follows. NDH-1 shuttles electrons from NADH, via FMN and iron-sulfur (Fe-S) centers, to quinones in the respiratory chain. The immediate electron acceptor for the enzyme in this species is believed to be ubiquinone. Couples the redox reaction to proton translocation (for every two electrons transferred, four hydrogen ions are translocated across the cytoplasmic membrane), and thus conserves the redox energy in a proton gradient. This subunit may bind ubiquinone. This Coxiella burnetii (strain CbuK_Q154) (Coxiella burnetii (strain Q154)) protein is NADH-quinone oxidoreductase subunit H.